We begin with the raw amino-acid sequence, 251 residues long: MSDLPRHSPRRQHAGESAVTAITSPEDTTKAVVIYSGGMDSYTVLHRALRAGFEVHALSFHYGQRHSRELETAHDVCQRLGIAHQVVDIRAIHGLIGNSALTDATQTMPDGDYDADNMAATVVPNRNMILLSLAIGHAVNIGANVCFYGAHGGDHVLYPDCRPEFVERMNDVAAIADFTPVRIAAPYLHASKEEILADGLAMGLDYAQTWTCYLGAERSCGHCGSCRERLAAFAAQGVTDPLVYAGAGASD.

A disordered region spans residues 1–21 (MSDLPRHSPRRQHAGESAVTA). 35–45 (YSGGMDSYTVL) provides a ligand contact to ATP. The Zn(2+) site is built by Cys-212, Cys-220, Cys-223, and Cys-226.

Belongs to the QueC family. Zn(2+) is required as a cofactor.

The catalysed reaction is 7-carboxy-7-deazaguanine + NH4(+) + ATP = 7-cyano-7-deazaguanine + ADP + phosphate + H2O + H(+). It participates in purine metabolism; 7-cyano-7-deazaguanine biosynthesis. Its function is as follows. Catalyzes the ATP-dependent conversion of 7-carboxy-7-deazaguanine (CDG) to 7-cyano-7-deazaguanine (preQ(0)). This Chromohalobacter salexigens (strain ATCC BAA-138 / DSM 3043 / CIP 106854 / NCIMB 13768 / 1H11) protein is 7-cyano-7-deazaguanine synthase.